The sequence spans 646 residues: Preterminal protein (646 aa).

Residues 357 to 366 (RLPVRRRRRR) carry the Nuclear localization signal motif. O-(5'-phospho-DNA)-serine is present on Ser555. Positions 619–646 (LHADVPLPPLQANPHPPLPPDARPQRTM) are disordered. The segment covering 624–640 (PLPPLQANPHPPLPPDA) has biased composition (pro residues).

This sequence belongs to the adenoviridae terminal protein family. Heterodimer with the polymerase; this heterodimer binds to bp 9 to 18 of the genome. Interacts with host POU2F1; POU2F1 binds to the auxiliary sequences in the inverted terminal repeats and tethers the pTP-POL heterodimer to the origin DNA thereby participating in the assembly of the pre-initiation complex (POL-TP-DBP-NFIA-POU2F1). In terms of processing, preterminal protein is used to replicate viral genome, upon genomic encapsidation it is processed first into iTP and finally into TP by adenovirus protease.

The protein localises to the host nucleus matrix. In terms of biological role, protein covalently bound to the viral DNA that acts as a primer for viral genomic replication by DNA strand displacement. Assembles on the viral origin of replication in an initiation complex with viral polymerase, DBP, host NFIA and host POU2F1/OCT1. During initiation, the polymerase covalently couples the first dCTP with Ser-580 of pTP. The terminal protein stimulates the template activity over 20 fold compared to protein-free templates. Neo-synthesized viral genomes are linked to two preterminal proteins, one for each 5' end. These new genomes are encapsidated in the nucleus, and during capsid maturation by viral protease, preterminal protein is first cleaved into intermediary (iTP), then into mature TP. May play a role in host nuclear matrix localization of genomic DNA. The polypeptide is Preterminal protein (Homo sapiens (Human)).